We begin with the raw amino-acid sequence, 138 residues long: Gamma-glutamylaminecyclotransferase (138 aa).

The Proton acceptor role is filled by E63.

Belongs to the gamma-glutamylcyclotransferase family.

The enzyme catalyses epsilon-(gamma-L-glutamyl)-L-lysine = 5-oxo-L-proline + L-lysine. Functionally, may contribute to degradation of proteins cross-linked by transglutaminases by degrading the cross-link between a lysine and a glutamic acid residue. Catalyzes the formation of 5-oxo-L-proline from L-gamma-glutamyl-L-epsilon-lysine. The polypeptide is Gamma-glutamylaminecyclotransferase (ggact) (Xenopus laevis (African clawed frog)).